A 727-amino-acid polypeptide reads, in one-letter code: Glucans biosynthesis glucosyltransferase H (727 aa).

Residues 18-41 are disordered; that stretch reads SAMPNERPGAMEPQKLSKMPEGFP. Helical transmembrane passes span 58-78, 97-117, 278-298, 408-428, 460-480, 496-516, and 572-592; these read FLVVGGALLLSLFAIYEMGAV, VNFCWIALAFCSGIAGFLILL, LQQFAARIYGPVIGTGLGWWV, IMAYLSSPFWLMLILTGLMLA, LFYITMGVLFGPKVFGVLLLL, IFSVIFEVILSALIAPIMMFI, and LLAWMSPALIGLWIAVPISAW.

It belongs to the glycosyltransferase 2 family. OpgH subfamily.

It is found in the cell inner membrane. It functions in the pathway glycan metabolism; osmoregulated periplasmic glucan (OPG) biosynthesis. Involved in the biosynthesis of osmoregulated periplasmic glucans (OPGs). The chain is Glucans biosynthesis glucosyltransferase H from Shewanella baltica (strain OS155 / ATCC BAA-1091).